Consider the following 694-residue polypeptide: Katanin p80 WD40 repeat-containing subunit B1 (694 aa).

WD repeat units lie at residues 18–58 (AHSS…CIMS), 61–100 (GHTS…ILRT), 103–142 (GHKA…CVFR), 145–186 (GHTQ…TEFT), 188–226 (HTSA…MIGS), and 229–269 (GETG…DVVH). 2 disordered regions span residues 319–410 (KPIP…PFPA) and 470–492 (TTSA…STGI). Residues 327 to 349 (ALGTTLRRNYERPTTSCTGQEMK) show a composition bias toward polar residues. Over residues 350–378 (QSSEADRRSPEGERRSPSSEDEKEDKESS) the composition is skewed to basic and acidic residues. Residues 470–481 (TTSASSPSRPVV) are compositionally biased toward low complexity. Positions 482–492 (NTTKPKPSTGI) are enriched in polar residues.

It belongs to the WD repeat KATNB1 family. Interacts with katna1. This interaction enhances the microtubule binding and severing activity of katna1 and also targets this activity to the centrosome.

Its subcellular location is the cytoplasm. The protein resides in the cytoskeleton. It is found in the microtubule organizing center. The protein localises to the centrosome. It localises to the spindle pole. Its subcellular location is the spindle. Functionally, participates in a complex which severs microtubules in an ATP-dependent manner. May act to target the enzymatic subunit of this complex to sites of action such as the centrosome. Microtubule severing may promote rapid reorganization of cellular microtubule arrays and the release of microtubules from the centrosome following nucleation. In Danio rerio (Zebrafish), this protein is Katanin p80 WD40 repeat-containing subunit B1 (katnb1).